We begin with the raw amino-acid sequence, 218 residues long: Large ribosomal subunit protein uL3 (218 aa).

Q153 is subject to N5-methylglutamine.

The protein belongs to the universal ribosomal protein uL3 family. In terms of assembly, part of the 50S ribosomal subunit. Forms a cluster with proteins L14 and L19. In terms of processing, methylated by PrmB.

Functionally, one of the primary rRNA binding proteins, it binds directly near the 3'-end of the 23S rRNA, where it nucleates assembly of the 50S subunit. The polypeptide is Large ribosomal subunit protein uL3 (Alkalilimnicola ehrlichii (strain ATCC BAA-1101 / DSM 17681 / MLHE-1)).